A 246-amino-acid chain; its full sequence is 1-(5-phosphoribosyl)-5-[(5-phosphoribosylamino)methylideneamino] imidazole-4-carboxamide isomerase (246 aa).

Asp7 functions as the Proton acceptor in the catalytic mechanism. Catalysis depends on Asp129, which acts as the Proton donor.

Belongs to the HisA/HisF family.

Its subcellular location is the cytoplasm. The catalysed reaction is 1-(5-phospho-beta-D-ribosyl)-5-[(5-phospho-beta-D-ribosylamino)methylideneamino]imidazole-4-carboxamide = 5-[(5-phospho-1-deoxy-D-ribulos-1-ylimino)methylamino]-1-(5-phospho-beta-D-ribosyl)imidazole-4-carboxamide. It participates in amino-acid biosynthesis; L-histidine biosynthesis; L-histidine from 5-phospho-alpha-D-ribose 1-diphosphate: step 4/9. In Buchnera aphidicola subsp. Acyrthosiphon pisum (strain Tuc7), this protein is 1-(5-phosphoribosyl)-5-[(5-phosphoribosylamino)methylideneamino] imidazole-4-carboxamide isomerase.